Here is a 660-residue protein sequence, read N- to C-terminus: Macrolide export ATP-binding/permease protein MacB (660 aa).

The ABC transporter domain maps to 10 to 248 (LVLENIVRKF…TDSQALYGKQ (239 aa)). 46–53 (GASGSGKS) contacts ATP. The next 4 membrane-spanning stretches (helical) occupy residues 285–305 (FLTMLGVIIGIGAIIAMVALG), 532–552 (ILTLLVSSIAAISLIVGGIGV), 593–613 (VIGGGLGILFGMSIGGLFLLF), and 625–645 (SIILSLTFSTLIGVCFGFSPA).

Belongs to the ABC transporter superfamily. Macrolide exporter (TC 3.A.1.122) family. As to quaternary structure, homodimer.

The protein resides in the cell inner membrane. In terms of biological role, non-canonical ABC transporter that contains transmembrane domains (TMD), which form a pore in the inner membrane, and an ATP-binding domain (NBD), which is responsible for energy generation. Confers resistance against macrolides. The chain is Macrolide export ATP-binding/permease protein MacB from Bartonella henselae (strain ATCC 49882 / DSM 28221 / CCUG 30454 / Houston 1) (Rochalimaea henselae).